Reading from the N-terminus, the 85-residue chain is Large ribosomal subunit protein bL27 (85 aa).

The interval 1 to 21 (MAHKKGVGSTRNGRDSDGQRL) is disordered.

The protein belongs to the bacterial ribosomal protein bL27 family.

This chain is Large ribosomal subunit protein bL27, found in Geotalea uraniireducens (strain Rf4) (Geobacter uraniireducens).